A 271-amino-acid chain; its full sequence is Phycocyanobilin lyase subunit alpha (271 aa).

It belongs to the CpcE/RpcE/PecE family. In terms of assembly, cpcE and CpcF associate to form a lyase.

Functionally, required for the chromophorylation of the cpcA1 gene product. In Pseudanabaena tenuis (strain PCC 7409), this protein is Phycocyanobilin lyase subunit alpha (cpcE1).